The sequence spans 179 residues: MSLKTRYRETIRPKLLKDLGLKNVHQVPKVQKVTLNRGLGEAATNSKALEASLKEMATISGQKALVTRAKKAIATFKIRQGMPIGCAVTLRGDRMYAFLERFINLALPRIRDFRGVSPKSFDGRGNYTIGVKEQLIFPEITFDKVDTIRGMDITIVTSASSDEQGKALLSEMGMPFRKK.

The protein belongs to the universal ribosomal protein uL5 family. As to quaternary structure, part of the 50S ribosomal subunit; part of the 5S rRNA/L5/L18/L25 subcomplex. Contacts the 5S rRNA and the P site tRNA. Forms a bridge to the 30S subunit in the 70S ribosome.

In terms of biological role, this is one of the proteins that bind and probably mediate the attachment of the 5S RNA into the large ribosomal subunit, where it forms part of the central protuberance. In the 70S ribosome it contacts protein S13 of the 30S subunit (bridge B1b), connecting the 2 subunits; this bridge is implicated in subunit movement. Contacts the P site tRNA; the 5S rRNA and some of its associated proteins might help stabilize positioning of ribosome-bound tRNAs. The chain is Large ribosomal subunit protein uL5 from Prochlorococcus marinus (strain NATL2A).